Reading from the N-terminus, the 234-residue chain is Mannose/glucose-specific lectin Cramoll (234 aa).

The Mn(2+) site is built by glutamate 8 and aspartate 10. Ca(2+) is bound by residues aspartate 10, tyrosine 12, asparagine 14, and aspartate 19. Tyrosine 12 contributes to the a carbohydrate binding site. Positions 19, 24, and 34 each coordinate Mn(2+). 99–100 contributes to the a carbohydrate binding site; that stretch reads LY. Ca(2+) is bound at residue aspartate 205. Residue arginine 225 coordinates a carbohydrate.

The protein belongs to the leguminous lectin family. Homotetramer. Post-translationally, the alpha and beta chains are produced by partial proteolytic processing of the lectin precursor by an asparaginyl endopeptidase.

Its function is as follows. Glucose/D-mannose specific lectin. This Cratylia mollis (Camaratu bean) protein is Mannose/glucose-specific lectin Cramoll.